The following is a 304-amino-acid chain: DnaJ homolog subfamily C member 17 (304 aa).

Residues 11-76 (DLYALLGIEE…AARAAYDKVR (66 aa)) enclose the J domain. Positions 79–106 (KKQAAERTQKLDEKRKKVKLDLEARERQ) are enriched in basic and acidic residues. The disordered stretch occupies residues 79–145 (KKQAAERTQK…SRQLEEQQRL (67 aa)). A Phosphoserine modification is found at Ser112. The segment covering 118–145 (SRSTRTLEQEIERLREEGSRQLEEQQRL) has biased composition (basic and acidic residues). Residues 178-249 (KCKKEDESKG…NPLKISWLEG (72 aa)) form the RRM domain. An N6-methyllysine modification is found at Lys264.

Its subcellular location is the cytoplasm. It is found in the nucleus. In terms of biological role, may negatively affect PAX8-induced thyroglobulin/TG transcription. This is DnaJ homolog subfamily C member 17 (DNAJC17) from Homo sapiens (Human).